The following is a 467-amino-acid chain: MTMSFQRFGMIEKVLRTIEKYNMIEKDDKIVMGISGGPDSLCMLDVLFNLKGKFNLKLYVVHVNHMIRGEDAKKDAEFVEKLCKDLDLPFFLFEENIPYLAKKMGLSEEQAGRYVRYKAFEETLKRVGGNKIAVAHNKNDVAETVLLNILRGTGLRGLIGIKPVNGNIIRPLIEIERREIEKYLKDKNLHPRIDHTNYEDLYTRNKIRLKVIPYIEEVFKIDLVENLSRMAAILLEEDDYLEAKCEEVFNQICEINGEEIKVDVDALKSQHTAIKRRLVRRMYFYVKGETDGLEYGHVEDVLNLLDKPTSSKIDLPFEIEALKMYNNLVIRKKKTKEKVKFKEVLKIPGVTTIEGIGKFKAYVVDISQVDDFNKGEYIKFFDYDKIKGEIVVKSREDGDRFSPLGMRGTKKLKEFFIDEKIPREERDYIPLVAIGKEIVWVVGYRMSEKFKVDKNTSKVLVIEYTKE.

35–40 (SGGPDS) is an ATP binding site.

It belongs to the tRNA(Ile)-lysidine synthase family.

The protein resides in the cytoplasm. It catalyses the reaction cytidine(34) in tRNA(Ile2) + L-lysine + ATP = lysidine(34) in tRNA(Ile2) + AMP + diphosphate + H(+). Functionally, ligates lysine onto the cytidine present at position 34 of the AUA codon-specific tRNA(Ile) that contains the anticodon CAU, in an ATP-dependent manner. Cytidine is converted to lysidine, thus changing the amino acid specificity of the tRNA from methionine to isoleucine. The protein is tRNA(Ile)-lysidine synthase of Caldanaerobacter subterraneus subsp. tengcongensis (strain DSM 15242 / JCM 11007 / NBRC 100824 / MB4) (Thermoanaerobacter tengcongensis).